The primary structure comprises 555 residues: CTP synthase (555 aa).

The amidoligase domain stretch occupies residues 1–277 (MPKEPETEYD…DQHVMERLNV (277 aa)). Ser-26 serves as a coordination point for CTP. Ser-26 provides a ligand contact to UTP. 27 to 32 (GLGKGI) serves as a coordination point for ATP. Tyr-67 lines the L-glutamine pocket. Asp-84 is a binding site for ATP. Positions 84 and 152 each coordinate Mg(2+). CTP contacts are provided by residues 159 to 161 (DIE), 198 to 203 (KTKPTQ), and Lys-234. UTP-binding positions include 198–203 (KTKPTQ) and Lys-234. The region spanning 307-542 (LVGKYDLEDA…LKSVDSTLDA (236 aa)) is the Glutamine amidotransferase type-1 domain. Gly-364 provides a ligand contact to L-glutamine. Cys-391 functions as the Nucleophile; for glutamine hydrolysis in the catalytic mechanism. L-glutamine contacts are provided by residues 392 to 395 (LGFQ), Glu-415, and Arg-472. Catalysis depends on residues His-515 and Glu-517.

Belongs to the CTP synthase family. Homotetramer.

It catalyses the reaction UTP + L-glutamine + ATP + H2O = CTP + L-glutamate + ADP + phosphate + 2 H(+). The enzyme catalyses L-glutamine + H2O = L-glutamate + NH4(+). The catalysed reaction is UTP + NH4(+) + ATP = CTP + ADP + phosphate + 2 H(+). It participates in pyrimidine metabolism; CTP biosynthesis via de novo pathway; CTP from UDP: step 2/2. Its activity is regulated as follows. Allosterically activated by GTP, when glutamine is the substrate; GTP has no effect on the reaction when ammonia is the substrate. The allosteric effector GTP functions by stabilizing the protein conformation that binds the tetrahedral intermediate(s) formed during glutamine hydrolysis. Inhibited by the product CTP, via allosteric rather than competitive inhibition. Functionally, catalyzes the ATP-dependent amination of UTP to CTP with either L-glutamine or ammonia as the source of nitrogen. Regulates intracellular CTP levels through interactions with the four ribonucleotide triphosphates. This Haloquadratum walsbyi (strain DSM 16790 / HBSQ001) protein is CTP synthase.